A 259-amino-acid chain; its full sequence is Pimeloyl-[acyl-carrier protein] methyl ester esterase (259 aa).

The 228-residue stretch at 15-242 folds into the AB hydrolase-1 domain; that stretch reads HLVLLHGWGL…AAHAPFISHP (228 aa). Substrate-binding positions include Trp-22, 82–83, and 143–147; these read SL and FLALQ. Residue Ser-82 is the Nucleophile of the active site. Active-site residues include Asp-207 and His-235. Residue His-235 coordinates substrate.

It belongs to the AB hydrolase superfamily. Carboxylesterase BioH family. Monomer.

Its subcellular location is the cytoplasm. The catalysed reaction is 6-carboxyhexanoyl-[ACP] methyl ester + H2O = 6-carboxyhexanoyl-[ACP] + methanol + H(+). It functions in the pathway cofactor biosynthesis; biotin biosynthesis. In terms of biological role, the physiological role of BioH is to remove the methyl group introduced by BioC when the pimeloyl moiety is complete. It allows to synthesize pimeloyl-ACP via the fatty acid synthetic pathway through the hydrolysis of the ester bonds of pimeloyl-ACP esters. The protein is Pimeloyl-[acyl-carrier protein] methyl ester esterase of Cronobacter sakazakii (strain ATCC BAA-894) (Enterobacter sakazakii).